An 80-amino-acid chain; its full sequence is RNA-binding protein Hfq (80 aa).

Residues 10-70 (DIFLNQVRKE…ISTISPMKSV (61 aa)) form the Sm domain.

Belongs to the Hfq family. Homohexamer.

RNA chaperone that binds small regulatory RNA (sRNAs) and mRNAs to facilitate mRNA translational regulation in response to envelope stress, environmental stress and changes in metabolite concentrations. Also binds with high specificity to tRNAs. This is RNA-binding protein Hfq from Ruminiclostridium cellulolyticum (strain ATCC 35319 / DSM 5812 / JCM 6584 / H10) (Clostridium cellulolyticum).